A 247-amino-acid chain; its full sequence is MSHRDTLFSAPIARLGDWTFDERVAEVFPDMIQRSVPGYSNIISMIGMLAERFVQPGTQVYDLGCSLGAATLSVRRNIHHDNCKIIAIDNSPAMIERCRHHIDAYKAPTPVDVIEGDIRDIAIENASMVVLNFTLQFLEPSERQALLDKIYQGLNPGGALVLSEKFSFEDAKVGELLFNMHHDFKRANGYSELEISQKRSMLENVMLTDSVETHKARLHQAGFEHSELWFQCFNFGSLVALKAEDAA.

Residues tyrosine 39, 64–66 (GCS), 89–90 (DN), 117–118 (DI), asparagine 132, and arginine 199 each bind S-adenosyl-L-methionine.

It belongs to the class I-like SAM-binding methyltransferase superfamily. Cx-SAM synthase family. As to quaternary structure, homodimer.

It catalyses the reaction prephenate + S-adenosyl-L-methionine = carboxy-S-adenosyl-L-methionine + 3-phenylpyruvate + H2O. In terms of biological role, catalyzes the conversion of S-adenosyl-L-methionine (SAM) to carboxy-S-adenosyl-L-methionine (Cx-SAM). The sequence is that of Carboxy-S-adenosyl-L-methionine synthase from Escherichia coli O7:K1 (strain IAI39 / ExPEC).